We begin with the raw amino-acid sequence, 137 residues long: Cofilin-1A (137 aa).

Residues 2 to 135 (SSGIALAPNC…KDSCFYEKCT (134 aa)) form the ADF-H domain.

It belongs to the actin-binding proteins ADF family.

It localises to the nucleus matrix. Its subcellular location is the cytoplasm. It is found in the cytoskeleton. In terms of biological role, controls reversibly actin polymerization and depolymerization in a pH-sensitive manner. It has the ability to bind G- and F-actin in a 1:1 ratio of cofilin to actin. It is the major component of intranuclear and cytoplasmic actin rods. This is Cofilin-1A (cofA) from Dictyostelium discoideum (Social amoeba).